The primary structure comprises 296 residues: Meiotically up-regulated gene 2 protein (296 aa).

The protein belongs to the UPF0612 family.

Its subcellular location is the cytoplasm. The protein localises to the nucleus. Its function is as follows. Has a role in meiosis. This is Meiotically up-regulated gene 2 protein (mug2) from Schizosaccharomyces pombe (strain 972 / ATCC 24843) (Fission yeast).